Here is a 101-residue protein sequence, read N- to C-terminus: Urease subunit beta (101 aa).

This sequence belongs to the urease beta subunit family. Heterotrimer of UreA (gamma), UreB (beta) and UreC (alpha) subunits. Three heterotrimers associate to form the active enzyme.

The protein resides in the cytoplasm. It catalyses the reaction urea + 2 H2O + H(+) = hydrogencarbonate + 2 NH4(+). It functions in the pathway nitrogen metabolism; urea degradation; CO(2) and NH(3) from urea (urease route): step 1/1. The sequence is that of Urease subunit beta from Azoarcus sp. (strain BH72).